The chain runs to 291 residues: Nucleotide-binding protein LGAS_1315 (291 aa).

13 to 20 (GMSGAGKT) is an ATP binding site. 63–66 (DLRV) provides a ligand contact to GTP.

It belongs to the RapZ-like family.

Functionally, displays ATPase and GTPase activities. The polypeptide is Nucleotide-binding protein LGAS_1315 (Lactobacillus gasseri (strain ATCC 33323 / DSM 20243 / BCRC 14619 / CIP 102991 / JCM 1131 / KCTC 3163 / NCIMB 11718 / NCTC 13722 / AM63)).